The chain runs to 1367 residues: Mediator of RNA polymerase II transcription subunit 23 (1367 aa).

The interval 1343-1367 is disordered; it reads PPQALSSGSPAPQANQVPTALPVTQ. A compositionally biased stretch (polar residues) spans 1346–1367; that stretch reads ALSSGSPAPQANQVPTALPVTQ.

The protein belongs to the Mediator complex subunit 23 family. Component of the Mediator complex, which is composed of MED1, MED4, MED6, MED7, MED8, MED9, MED10, MED11, MED12, MED13, MED13L, MED14, MED15, MED16, MED17, MED18, MED19, MED20, MED21, MED22, MED23, MED24, MED25, MED26, MED27, MED29, MED30, MED31, CCNC, CDK8 and CDC2L6/CDK11. The MED12, MED13, CCNC and CDK8 subunits form a distinct module termed the CDK8 module. Mediator containing the CDK8 module is less active than Mediator lacking this module in supporting transcriptional activation. Individual preparations of the Mediator complex lacking one or more distinct subunits have been variously termed ARC, CRSP, DRIP, PC2, SMCC and TRAP. Interacts with CDK8, CEBPB, CTNNB1, ELK1 and GLI3. Interacts with the adenovirus E1A protein.

The protein resides in the nucleus. Its function is as follows. Component of the Mediator complex, a coactivator involved in the regulated transcription of nearly all RNA polymerase II-dependent genes. Mediator functions as a bridge to convey information from gene-specific regulatory proteins to the basal RNA polymerase II transcription machinery. Mediator is recruited to promoters by direct interactions with regulatory proteins and serves as a scaffold for the assembly of a functional pre-initiation complex with RNA polymerase II and the general transcription factors. Also required for transcriptional activation subsequent to the assembly of the pre-initiation complex. Required for transcriptional activation by adenovirus E1A protein. Required for ELK1-dependent transcriptional activation in response to activated Ras signaling. This is Mediator of RNA polymerase II transcription subunit 23 (Med23) from Rattus norvegicus (Rat).